Reading from the N-terminus, the 433-residue chain is Enolase (433 aa).

Gln164 contributes to the (2R)-2-phosphoglycerate binding site. Glu206 acts as the Proton donor in catalysis. Asp243, Glu289, and Asp316 together coordinate Mg(2+). (2R)-2-phosphoglycerate-binding residues include Lys341, Arg370, Ser371, and Lys392. The active-site Proton acceptor is Lys341.

The protein belongs to the enolase family. Requires Mg(2+) as cofactor.

Its subcellular location is the cytoplasm. It is found in the secreted. The protein localises to the cell surface. It carries out the reaction (2R)-2-phosphoglycerate = phosphoenolpyruvate + H2O. It functions in the pathway carbohydrate degradation; glycolysis; pyruvate from D-glyceraldehyde 3-phosphate: step 4/5. Catalyzes the reversible conversion of 2-phosphoglycerate (2-PG) into phosphoenolpyruvate (PEP). It is essential for the degradation of carbohydrates via glycolysis. This chain is Enolase, found in Borreliella burgdorferi (strain ZS7) (Borrelia burgdorferi).